Reading from the N-terminus, the 295-residue chain is 4-hydroxy-tetrahydrodipicolinate synthase (295 aa).

Residue Thr-46 participates in pyruvate binding. The Proton donor/acceptor role is filled by Tyr-134. The active-site Schiff-base intermediate with substrate is Lys-162. Residue Ile-205 coordinates pyruvate.

It belongs to the DapA family. In terms of assembly, homotetramer; dimer of dimers.

The protein localises to the cytoplasm. It carries out the reaction L-aspartate 4-semialdehyde + pyruvate = (2S,4S)-4-hydroxy-2,3,4,5-tetrahydrodipicolinate + H2O + H(+). It participates in amino-acid biosynthesis; L-lysine biosynthesis via DAP pathway; (S)-tetrahydrodipicolinate from L-aspartate: step 3/4. In terms of biological role, catalyzes the condensation of (S)-aspartate-beta-semialdehyde [(S)-ASA] and pyruvate to 4-hydroxy-tetrahydrodipicolinate (HTPA). The polypeptide is 4-hydroxy-tetrahydrodipicolinate synthase (Anaeromyxobacter sp. (strain Fw109-5)).